A 389-amino-acid polypeptide reads, in one-letter code: Na(+)/H(+) antiporter NhaA (389 aa).

Helical transmembrane passes span Ile8–Trp28, Ile48–Ile68, Met91–Ile111, Gly119–Phe139, Asn173–Leu193, Ala214–Leu234, Trp262–Phe282, Leu288–Gly308, Leu327–Val347, and Gly361–Ile381.

The protein belongs to the NhaA Na(+)/H(+) (TC 2.A.33) antiporter family.

It is found in the cell membrane. The catalysed reaction is Na(+)(in) + 2 H(+)(out) = Na(+)(out) + 2 H(+)(in). Functionally, na(+)/H(+) antiporter that extrudes sodium in exchange for external protons. The chain is Na(+)/H(+) antiporter NhaA from Desulfitobacterium hafniense (strain DSM 10664 / DCB-2).